A 905-amino-acid chain; its full sequence is DNA gyrase subunit A (905 aa).

The 490-residue stretch at 35-524 (IPDVRDGLKP…GEFDQDIEDL (490 aa)) folds into the Topo IIA-type catalytic domain. Residue tyrosine 123 is the O-(5'-phospho-DNA)-tyrosine intermediate of the active site. The short motif at 551–557 (QKRGGKG) is the GyrA-box element.

It belongs to the type II topoisomerase GyrA/ParC subunit family. As to quaternary structure, heterotetramer, composed of two GyrA and two GyrB chains. In the heterotetramer, GyrA contains the active site tyrosine that forms a transient covalent intermediate with DNA, while GyrB binds cofactors and catalyzes ATP hydrolysis.

The protein localises to the cytoplasm. The enzyme catalyses ATP-dependent breakage, passage and rejoining of double-stranded DNA.. Functionally, a type II topoisomerase that negatively supercoils closed circular double-stranded (ds) DNA in an ATP-dependent manner to modulate DNA topology and maintain chromosomes in an underwound state. Negative supercoiling favors strand separation, and DNA replication, transcription, recombination and repair, all of which involve strand separation. Also able to catalyze the interconversion of other topological isomers of dsDNA rings, including catenanes and knotted rings. Type II topoisomerases break and join 2 DNA strands simultaneously in an ATP-dependent manner. This is DNA gyrase subunit A from Rickettsia prowazekii (strain Madrid E).